The primary structure comprises 398 residues: Protein ELC (398 aa).

A UEV domain is found at 18–162 (ALSQRGPSSV…ARDPPLYSRR (145 aa)). Residues 157–202 (PLYSRRRPQPPPPSPPTVYDSSLSRPPSADQSLPRPFPPSPYGGGV) are disordered. Positions 175-187 (YDSSLSRPPSADQ) are enriched in polar residues. The stretch at 247–291 (EAEAEELLSLQAGLKRREDELNIGLKEMVEEKETLEQQLQIISMN) forms a coiled coil. Residues 322 to 390 (DTLSKQMLEC…RAAQMEVQVA (69 aa)) form the SB domain.

The protein belongs to the ubiquitin-conjugating enzyme family. UEV subfamily. As to quaternary structure, component of the endosomal sorting required for transport complex I (ESCRT-I), composed of ELC, VPS28 and VPS37. Interacts with VPS28 and VPS37. Binds ubiquitin in vitro. Interacts with FREE1. Interacts with TOL9/TOM1D. Interacts with BRO1/ALIX. Interacts with SINAT1, SINAT2, SINAT3 and SINAT4. In terms of processing, ubiquitinated by SINAT1, SINAT2, SINAT3 and SINAT4 for subsequent proteasomal degradation. Expressed in roots, stems, leaves and flowers.

It localises to the early endosome. Its subcellular location is the late endosome. The protein localises to the prevacuolar compartment. Functionally, component of the ESCRT-I complex (endosomal sorting complex required for transport I), a regulator of vesicular trafficking process. Required for the sorting of endocytic ubiquitinated cargos into multivesicular bodies (MVBs). May control nuclear division through the microtubule cytoskeleton. This Arabidopsis thaliana (Mouse-ear cress) protein is Protein ELC.